Reading from the N-terminus, the 822-residue chain is Calpain-3 (822 aa).

Positions Met-1–Gly-36 are disordered. The Calpain catalytic domain occupies Leu-74–Thr-418. Residues Cys-129, His-335, and Asn-359 contribute to the active site. The domain III stretch occupies residues Ala-419–Asn-587. The interval Thr-588–Ser-649 is linker. Positions Pro-600–Glu-651 are disordered. Basic and acidic residues predominate over residues Glu-623–Ala-635. 4 EF-hand domains span residues Lys-650–Lys-684, Phe-693–Lys-726, Lys-723–His-758, and Val-788–Ala-822. Residues Lys-650–Ala-822 form a domain IV region. Ca(2+)-binding residues include Ala-663, Asp-666, Glu-668, Glu-673, Asp-706, Asp-708, Ser-710, Arg-712, Glu-717, Asp-736, Asp-738, Ser-740, Thr-742, Glu-747, Asp-801, Asp-803, Asp-805, and Ile-807.

The protein belongs to the peptidase C2 family. Homodimer; via EF-hand domain 4. Interacts with TTN/titin. Interacts with CMYA5; this interaction, which results in CMYA5 proteolysis, may protect CAPN3 from autolysis. Interacts with SIMC1. Interacts with UTP25; the interaction is required for CAPN3 translocation to the nucleolus. In terms of tissue distribution, skeletal muscle.

It is found in the cytoplasm. The protein localises to the nucleus. Its subcellular location is the nucleolus. It carries out the reaction Broad endopeptidase activity.. With respect to regulation, activated by micromolar concentrations of calcium and inhibited by calpastatin. Its function is as follows. Calcium-regulated non-lysosomal thiol-protease. Proteolytically cleaves CTBP1. Mediates, with UTP25, the proteasome-independent degradation of p53/TP53. The sequence is that of Calpain-3 (CAPN3) from Ovis aries (Sheep).